A 434-amino-acid chain; its full sequence is 3-phosphoshikimate 1-carboxyvinyltransferase (434 aa).

3 residues coordinate 3-phosphoshikimate: lysine 22, serine 23, and arginine 27. Lysine 22 serves as a coordination point for phosphoenolpyruvate. Residues glycine 93 and arginine 121 each contribute to the phosphoenolpyruvate site. Residues serine 168, serine 169, glutamine 170, serine 199, aspartate 320, and lysine 347 each coordinate 3-phosphoshikimate. Position 170 (glutamine 170) interacts with phosphoenolpyruvate. Catalysis depends on aspartate 320, which acts as the Proton acceptor. Residues arginine 351, arginine 394, and lysine 419 each coordinate phosphoenolpyruvate.

It belongs to the EPSP synthase family. As to quaternary structure, monomer.

Its subcellular location is the cytoplasm. It carries out the reaction 3-phosphoshikimate + phosphoenolpyruvate = 5-O-(1-carboxyvinyl)-3-phosphoshikimate + phosphate. The protein operates within metabolic intermediate biosynthesis; chorismate biosynthesis; chorismate from D-erythrose 4-phosphate and phosphoenolpyruvate: step 6/7. In terms of biological role, catalyzes the transfer of the enolpyruvyl moiety of phosphoenolpyruvate (PEP) to the 5-hydroxyl of shikimate-3-phosphate (S3P) to produce enolpyruvyl shikimate-3-phosphate and inorganic phosphate. The protein is 3-phosphoshikimate 1-carboxyvinyltransferase of Burkholderia ambifaria (strain ATCC BAA-244 / DSM 16087 / CCUG 44356 / LMG 19182 / AMMD) (Burkholderia cepacia (strain AMMD)).